The following is a 66-amino-acid chain: Large ribosomal subunit protein bL31 (66 aa).

Zn(2+) contacts are provided by Cys-16, Cys-18, Cys-36, and Cys-39.

The protein belongs to the bacterial ribosomal protein bL31 family. Type A subfamily. Part of the 50S ribosomal subunit. Zn(2+) is required as a cofactor.

Its function is as follows. Binds the 23S rRNA. The protein is Large ribosomal subunit protein bL31 of Clostridioides difficile (strain 630) (Peptoclostridium difficile).